The following is a 150-amino-acid chain: Large ribosomal subunit protein uL11 (150 aa).

It belongs to the universal ribosomal protein uL11 family. In terms of assembly, part of the ribosomal stalk of the 50S ribosomal subunit. Interacts with L10 and the large rRNA to form the base of the stalk. L10 forms an elongated spine to which L12 dimers bind in a sequential fashion forming a multimeric L10(L12)X complex. Post-translationally, one or more lysine residues are methylated.

Its function is as follows. Forms part of the ribosomal stalk which helps the ribosome interact with GTP-bound translation factors. The protein is Large ribosomal subunit protein uL11 of Cereibacter sphaeroides (strain KD131 / KCTC 12085) (Rhodobacter sphaeroides).